A 2141-amino-acid chain; its full sequence is Oxygen-regulated protein 1 (2141 aa).

The segment covering M1 to S10 has biased composition (polar residues). A disordered region spans residues M1–G20. In terms of domain architecture, Doublecortin 1 spans K34–D116. Residues L126–P149 form a disordered region. A Doublecortin 2 domain is found at R156–D235. 3 disordered regions span residues R259–Y278, Y1432–R1458, and D1589–G1612. Residues H268–Y278 show a composition bias toward polar residues. Residues S1435–E1444 show a composition bias toward basic and acidic residues. 2 stretches are compositionally biased toward polar residues: residues S1448–R1458 and E1598–P1610.

As to quaternary structure, interacts (via the doublecortin domains) with microtubules. Interacts with RP1L1. Interacts with MAK.

It localises to the cytoplasm. Its subcellular location is the cytoskeleton. It is found in the cilium axoneme. The protein resides in the cell projection. The protein localises to the cilium. It localises to the photoreceptor outer segment. Microtubule-associated protein regulating the stability and length of the microtubule-based axoneme of photoreceptors. Required for the differentiation of photoreceptor cells, it plays a role in the organization of the outer segment of rod and cone photoreceptors ensuring the correct orientation and higher-order stacking of outer segment disks along the photoreceptor axoneme. This is Oxygen-regulated protein 1 (RP1) from Canis lupus familiaris (Dog).